The chain runs to 188 residues: Probable nicotinate-nucleotide adenylyltransferase (188 aa).

It belongs to the NadD family.

The enzyme catalyses nicotinate beta-D-ribonucleotide + ATP + H(+) = deamido-NAD(+) + diphosphate. The protein operates within cofactor biosynthesis; NAD(+) biosynthesis; deamido-NAD(+) from nicotinate D-ribonucleotide: step 1/1. Its function is as follows. Catalyzes the reversible adenylation of nicotinate mononucleotide (NaMN) to nicotinic acid adenine dinucleotide (NaAD). This Solibacter usitatus (strain Ellin6076) protein is Probable nicotinate-nucleotide adenylyltransferase.